The following is a 164-amino-acid chain: S-ribosylhomocysteine lyase (164 aa).

The Fe cation site is built by His54, His58, and Cys128.

The protein belongs to the LuxS family. As to quaternary structure, homodimer. Fe cation is required as a cofactor.

The catalysed reaction is S-(5-deoxy-D-ribos-5-yl)-L-homocysteine = (S)-4,5-dihydroxypentane-2,3-dione + L-homocysteine. Its function is as follows. Involved in the synthesis of autoinducer 2 (AI-2) which is secreted by bacteria and is used to communicate both the cell density and the metabolic potential of the environment. The regulation of gene expression in response to changes in cell density is called quorum sensing. Catalyzes the transformation of S-ribosylhomocysteine (RHC) to homocysteine (HC) and 4,5-dihydroxy-2,3-pentadione (DPD). The sequence is that of S-ribosylhomocysteine lyase from Campylobacter hominis (strain ATCC BAA-381 / DSM 21671 / CCUG 45161 / LMG 19568 / NCTC 13146 / CH001A).